The sequence spans 404 residues: LL-diaminopimelate aminotransferase (404 aa).

Residues tyrosine 15 and glycine 42 each contribute to the substrate site. Pyridoxal 5'-phosphate contacts are provided by residues tyrosine 72, 108 to 109, tyrosine 132, asparagine 188, tyrosine 219, and 247 to 249; these read AK and SFS. Substrate contacts are provided by lysine 109, tyrosine 132, and asparagine 188. Lysine 250 bears the N6-(pyridoxal phosphate)lysine mark. Residues arginine 258 and asparagine 288 each contribute to the pyridoxal 5'-phosphate site. Substrate-binding residues include asparagine 288 and arginine 384.

Belongs to the class-I pyridoxal-phosphate-dependent aminotransferase family. LL-diaminopimelate aminotransferase subfamily. Homodimer. Pyridoxal 5'-phosphate serves as cofactor.

It catalyses the reaction (2S,6S)-2,6-diaminopimelate + 2-oxoglutarate = (S)-2,3,4,5-tetrahydrodipicolinate + L-glutamate + H2O + H(+). Its pathway is amino-acid biosynthesis; L-lysine biosynthesis via DAP pathway; LL-2,6-diaminopimelate from (S)-tetrahydrodipicolinate (aminotransferase route): step 1/1. In terms of biological role, involved in the synthesis of meso-diaminopimelate (m-DAP or DL-DAP), required for both lysine and peptidoglycan biosynthesis. Catalyzes the direct conversion of tetrahydrodipicolinate to LL-diaminopimelate. This is LL-diaminopimelate aminotransferase from Lachnospira eligens (strain ATCC 27750 / DSM 3376 / VPI C15-48 / C15-B4) (Eubacterium eligens).